Reading from the N-terminus, the 717-residue chain is Methionine--tRNA ligase (717 aa).

The short motif at 19–29 is the 'HIGH' region element; that stretch reads PYANGDLHVGH. Zn(2+)-binding residues include Cys150, Cys153, Cys162, and Cys166. The 'KMSKS' region signature appears at 356-360; it reads ALSTS. Position 359 (Thr359) interacts with ATP. The interval 573–603 is disordered; the sequence is ERVEEASEASAEASNEGGEAAGDEVDDGDVD. Low complexity predominate over residues 580–590; that stretch reads EASAEASNEGG. Over residues 593–603 the composition is skewed to acidic residues; sequence AGDEVDDGDVD. The tRNA-binding domain maps to 619–717; that stretch reads DFEGVDMRVG…EDAPLGTRIK (99 aa).

The protein belongs to the class-I aminoacyl-tRNA synthetase family. MetG type 1 subfamily. Homodimer. It depends on Zn(2+) as a cofactor.

The protein localises to the cytoplasm. The catalysed reaction is tRNA(Met) + L-methionine + ATP = L-methionyl-tRNA(Met) + AMP + diphosphate. Is required not only for elongation of protein synthesis but also for the initiation of all mRNA translation through initiator tRNA(fMet) aminoacylation. In Haloarcula marismortui (strain ATCC 43049 / DSM 3752 / JCM 8966 / VKM B-1809) (Halobacterium marismortui), this protein is Methionine--tRNA ligase.